The following is a 570-amino-acid chain: Peptidyl-prolyl cis-trans isomerase FKBP9 (570 aa).

The N-terminal stretch at 1 to 24 is a signal peptide; sequence MAFRGWRPPPPPLLLLLLWVTGQA. 4 consecutive PPIase FKBP-type domains span residues 54-142, 166-254, 278-365, and 389-477; these read GDFV…MDIW, SDFV…LDLH, GDFL…IDFH, and GDYL…LELV. Residues asparagine 174, asparagine 286, asparagine 302, and asparagine 397 are each glycosylated (N-linked (GlcNAc...) asparagine). 2 EF-hand domains span residues 488–523 and 533–568; these read WNGE…QVAS and DAEL…AKHD. Ca(2+)-binding residues include aspartate 501, aspartate 503, asparagine 505, glutamate 507, glutamate 512, aspartate 546, asparagine 548, aspartate 550, lysine 552, and glutamate 557. Positions 567 to 570 match the Prevents secretion from ER motif; the sequence is HDEL.

Phosphorylated.

The protein resides in the endoplasmic reticulum. It carries out the reaction [protein]-peptidylproline (omega=180) = [protein]-peptidylproline (omega=0). With respect to regulation, inhibited by FK506. Its function is as follows. PPIases accelerate the folding of proteins during protein synthesis. This Homo sapiens (Human) protein is Peptidyl-prolyl cis-trans isomerase FKBP9 (FKBP9).